Consider the following 76-residue polypeptide: UPF0352 protein ECA2748 (76 aa).

This sequence belongs to the UPF0352 family.

This is UPF0352 protein ECA2748 from Pectobacterium atrosepticum (strain SCRI 1043 / ATCC BAA-672) (Erwinia carotovora subsp. atroseptica).